The following is a 221-amino-acid chain: Probable nicotinate-nucleotide adenylyltransferase (221 aa).

The protein belongs to the NadD family.

The catalysed reaction is nicotinate beta-D-ribonucleotide + ATP + H(+) = deamido-NAD(+) + diphosphate. It participates in cofactor biosynthesis; NAD(+) biosynthesis; deamido-NAD(+) from nicotinate D-ribonucleotide: step 1/1. Functionally, catalyzes the reversible adenylation of nicotinate mononucleotide (NaMN) to nicotinic acid adenine dinucleotide (NaAD). This Marinomonas sp. (strain MWYL1) protein is Probable nicotinate-nucleotide adenylyltransferase.